The following is a 401-amino-acid chain: Putative phosphatidylinositol 4-phosphate 5-kinase 11 (401 aa).

Positions 1–390 constitute a PIPK domain; the sequence is MELRATVENR…RFQDFVSNIF (390 aa). Polar residues predominate over residues 242-260; it reads SFKSNSTKSMKTASSSPDR. Residues 242-268 are disordered; that stretch reads SFKSNSTKSMKTASSSPDRSSVAMYSC. The interval 350 to 371 is activation loop; sequence YGMKKRIEHCYKSIQYNSNSIS.

The catalysed reaction is a 1,2-diacyl-sn-glycero-3-phospho-(1D-myo-inositol 4-phosphate) + ATP = a 1,2-diacyl-sn-glycero-3-phospho-(1D-myo-inositol-4,5-bisphosphate) + ADP + H(+). The sequence is that of Putative phosphatidylinositol 4-phosphate 5-kinase 11 (PIP5K11) from Arabidopsis thaliana (Mouse-ear cress).